Consider the following 116-residue polypeptide: uncharacterized protein (116 aa).

This is an uncharacterized protein from Archaeoglobus fulgidus (strain ATCC 49558 / DSM 4304 / JCM 9628 / NBRC 100126 / VC-16).